The primary structure comprises 355 residues: Inositol-tetrakisphosphate 1-kinase 4 (355 aa).

Lys-65 is a 1D-myo-inositol 1,3,4-trisphosphate binding site. 2 residues coordinate ATP: Arg-101 and Lys-146. The 212-residue stretch at 107 to 318 folds into the ATP-grasp domain; the sequence is VVSGLRTPVS…FFLEMLRGTR (212 aa). Positions 157 and 190 each coordinate 1D-myo-inositol 1,3,4-trisphosphate. Residues 179 to 190 and Ser-205 contribute to the ATP site; that span reads QEFVNHGGVLFK. The interval 225–248 is disordered; sequence FANISNQPLPPPDDDGGAADDDTP. The segment covering 236–247 has biased composition (acidic residues); sequence PDDDGGAADDDT. Mg(2+) is bound by residues Asp-272, Asp-289, and Asn-291. A 1D-myo-inositol 1,3,4-trisphosphate-binding site is contributed by Asn-291.

Belongs to the ITPK1 family. Monomer. It depends on Mg(2+) as a cofactor.

It catalyses the reaction 1D-myo-inositol 3,4,5,6-tetrakisphosphate + ATP = 1D-myo-inositol 1,3,4,5,6-pentakisphosphate + ADP + H(+). The catalysed reaction is 1D-myo-inositol 1,3,4-trisphosphate + ATP = 1D-myo-inositol 1,3,4,5-tetrakisphosphate + ADP + H(+). The enzyme catalyses 1D-myo-inositol 1,3,4-trisphosphate + ATP = 1D-myo-inositol 1,3,4,6-tetrakisphosphate + ADP + H(+). Functionally, kinase that can phosphorylate various inositol polyphosphate such as Ins(3,4,5,6)P4 or Ins(1,3,4)P3 and participates in phytic acid biosynthesis in developing seeds. Phytic acid is the primary storage form of phosphorus in cereal grains and other plant seeds. The chain is Inositol-tetrakisphosphate 1-kinase 4 (ITPK4) from Oryza sativa subsp. indica (Rice).